The following is a 334-amino-acid chain: tRNA N6-adenosine threonylcarbamoyltransferase (334 aa).

Residues H112 and H116 each coordinate Fe cation. Substrate-binding positions include 135 to 139 (VVSGG), D168, G181, D185, and N274. D303 serves as a coordination point for Fe cation.

It belongs to the KAE1 / TsaD family. Fe(2+) serves as cofactor.

The protein resides in the cytoplasm. The enzyme catalyses L-threonylcarbamoyladenylate + adenosine(37) in tRNA = N(6)-L-threonylcarbamoyladenosine(37) in tRNA + AMP + H(+). Its function is as follows. Required for the formation of a threonylcarbamoyl group on adenosine at position 37 (t(6)A37) in tRNAs that read codons beginning with adenine. Is involved in the transfer of the threonylcarbamoyl moiety of threonylcarbamoyl-AMP (TC-AMP) to the N6 group of A37, together with TsaE and TsaB. TsaD likely plays a direct catalytic role in this reaction. The chain is tRNA N6-adenosine threonylcarbamoyltransferase from Anaeromyxobacter dehalogenans (strain 2CP-1 / ATCC BAA-258).